Reading from the N-terminus, the 137-residue chain is MANKPSAEELKKNLSEMQFYVTQNHGTEPPFTGRLLHNKRDGVYHCLICDAPLFHSQTKYDSGCGWPSFYEPLSEESIRYIKDLSHGMQRIEIRCGNCDAHLGHVFPDGPQPTGERYCVNSASLRFTDGENGEEING.

In terms of domain architecture, MsrB spans 7–129; that stretch reads AEELKKNLSE…NSASLRFTDG (123 aa). Residues cysteine 46, cysteine 49, cysteine 95, and cysteine 98 each contribute to the Zn(2+) site. The Nucleophile role is filled by cysteine 118.

It belongs to the MsrB Met sulfoxide reductase family. Zn(2+) is required as a cofactor.

It carries out the reaction L-methionyl-[protein] + [thioredoxin]-disulfide + H2O = L-methionyl-(R)-S-oxide-[protein] + [thioredoxin]-dithiol. This is Peptide methionine sulfoxide reductase MsrB from Escherichia coli O45:K1 (strain S88 / ExPEC).